The chain runs to 310 residues: tRNA pseudouridine synthase B (310 aa).

D47 serves as the catalytic Nucleophile.

This sequence belongs to the pseudouridine synthase TruB family. Type 1 subfamily.

The enzyme catalyses uridine(55) in tRNA = pseudouridine(55) in tRNA. Functionally, responsible for synthesis of pseudouridine from uracil-55 in the psi GC loop of transfer RNAs. This chain is tRNA pseudouridine synthase B, found in Caulobacter vibrioides (strain ATCC 19089 / CIP 103742 / CB 15) (Caulobacter crescentus).